A 254-amino-acid chain; its full sequence is Alcohol dehydrogenase (254 aa).

Position 9–32 (9–32 (IFVAGLGGIGLDTSRELVKRDLKN)) interacts with NAD(+). Serine 138 serves as a coordination point for substrate. Catalysis depends on tyrosine 151, which acts as the Proton acceptor.

This sequence belongs to the short-chain dehydrogenases/reductases (SDR) family. As to quaternary structure, homodimer.

It carries out the reaction a primary alcohol + NAD(+) = an aldehyde + NADH + H(+). The catalysed reaction is a secondary alcohol + NAD(+) = a ketone + NADH + H(+). The polypeptide is Alcohol dehydrogenase (Adh) (Drosophila paulistorum (Fruit fly)).